A 120-amino-acid polypeptide reads, in one-letter code: Large ribosomal subunit protein uL24 (120 aa).

The disordered stretch occupies residues 1–26 (MSKQPDKQRKSQRRAPLHERHKQVRA). Positions 10–24 (KSQRRAPLHERHKQV) are enriched in basic residues.

Belongs to the universal ribosomal protein uL24 family. Part of the 50S ribosomal subunit. Interacts weakly with protein L4.

Functionally, one of two assembly initiator proteins, it binds directly to the 5'-end of the 23S rRNA, where it nucleates assembly of the 50S subunit. Its function is as follows. Stabilizes the tertiary rRNA structure within the 23S rRNA domain (domain I) to which it binds. Located at the polypeptide exit tunnel on the outside of the subunit. In Haloarcula marismortui (strain ATCC 43049 / DSM 3752 / JCM 8966 / VKM B-1809) (Halobacterium marismortui), this protein is Large ribosomal subunit protein uL24 (rpl24).